We begin with the raw amino-acid sequence, 198 residues long: uncharacterized protein (198 aa).

Residues 51–74 (EEPDNGDDRGSRRTTGQGRKWAAH) are disordered.

This is an uncharacterized protein from Homo sapiens (Human).